The following is a 341-amino-acid chain: 3-keto-steroid reductase/17-beta-hydroxysteroid dehydrogenase 7 (341 aa).

Over Met-1–Asn-229 the chain is Extracellular. An NAD(+)-binding site is contributed by Thr-8–Gly-15. N-linked (GlcNAc...) asparagine glycosylation occurs at Asn-37. Residue Ser-171 coordinates substrate. N-linked (GlcNAc...) asparagine glycosylation is present at Asn-178. Catalysis depends on Tyr-193, which acts as the Proton acceptor. A glycan (N-linked (GlcNAc...) asparagine) is linked at Asn-229. Residues Leu-230 to Leu-250 form a helical membrane-spanning segment. Over Arg-251–Leu-341 the chain is Cytoplasmic.

The protein belongs to the short-chain dehydrogenases/reductases (SDR) family. ERG27 subfamily. Binds to the short form of prolactin receptor. In terms of processing, phosphorylated. As to expression, highly expressed in adrenal gland, liver, lung and thymus. Expressed in breast, ovaries, pituitary gland, pregnant uterus, prostate, kidney, lymph node, small intestine, spinal cord and trachea. Weakly expressed in all other tissues tested. Expressed in eye ciliary epithelial cells and neuroendocrine cells.

It localises to the endoplasmic reticulum membrane. The enzyme catalyses 17beta-estradiol + NADP(+) = estrone + NADPH + H(+). The catalysed reaction is a 3beta-hydroxysteroid + NADP(+) = a 3-oxosteroid + NADPH + H(+). It catalyses the reaction 3-dehydro-4alpha-methylzymosterol + NADPH + H(+) = 4alpha-methylzymosterol + NADP(+). It carries out the reaction zymosterone + NADPH + H(+) = zymosterol + NADP(+). The enzyme catalyses 4alpha-methyl-5alpha-cholest-8-en-3-one + NADPH + H(+) = 4alpha-methyl-5alpha-cholest-8-en-3beta-ol + NADP(+). The catalysed reaction is 4alpha-methyl-5alpha-cholest-7-en-3beta-ol + NADP(+) = 4alpha-methyl-5alpha-cholest-7-en-3-one + NADPH + H(+). It catalyses the reaction 5alpha-cholest-8-en-3-one + NADPH + H(+) = 5alpha-cholest-8-en-3beta-ol + NADP(+). It carries out the reaction 5alpha-androstane-3beta,17beta-diol + NADP(+) = 17beta-hydroxy-5alpha-androstan-3-one + NADPH + H(+). The enzyme catalyses progesterone + NADPH + H(+) = 3beta-hydroxypregn-4-ene-20-one + NADP(+). Its pathway is steroid biosynthesis; estrogen biosynthesis. It participates in steroid biosynthesis; zymosterol biosynthesis; zymosterol from lanosterol: step 5/6. With respect to regulation, estradiol 17-beta-dehydrogenase and dihydrotestosterone oxidoreductase activities are selectively inhibited by 4-methyl-4-aza-5alpha-androstane derivatives, such as 17beta-[(N-Heptyl)methylamino]-4-aza-5r-androstan-3-one and 17beta-(N-Decylformamido)-4-aza-5r-androstan-3-one. In terms of biological role, bifunctional enzyme involved in steroid-hormone metabolism and cholesterol biosynthesis. Catalyzes the NADP(H)-dependent reduction of estrogens and androgens and regulates the biological potency of these steroids. Converts estrone (E1) to a more potent estrogen, 17beta-estradiol (E2). Converts dihydrotestosterone (DHT) to its inactive form 5a-androstane-3b,17b-diol. Converts moderately progesterone to 3beta-hydroxypregn-4-ene-20-one, leading to its inactivation. Additionally, participates in the post-squalene cholesterol biosynthesis, as a 3-ketosteroid reductase. Its function is as follows. Does not have enzymatic activities toward E1 and DHT. The sequence is that of 3-keto-steroid reductase/17-beta-hydroxysteroid dehydrogenase 7 (HSD17B7) from Homo sapiens (Human).